Consider the following 101-residue polypeptide: Small ribosomal subunit protein bS16 (101 aa).

The protein belongs to the bacterial ribosomal protein bS16 family.

This Ureaplasma parvum serovar 3 (strain ATCC 700970) protein is Small ribosomal subunit protein bS16.